Reading from the N-terminus, the 390-residue chain is Succinyl-diaminopimelate desuccinylase (390 aa).

Histidine 74 is a binding site for Zn(2+). Residue aspartate 76 is part of the active site. A Zn(2+)-binding site is contributed by aspartate 107. Glutamate 140 acts as the Proton acceptor in catalysis. Zn(2+)-binding residues include glutamate 141, glutamate 169, and histidine 363.

It belongs to the peptidase M20A family. DapE subfamily. In terms of assembly, homodimer. Zn(2+) is required as a cofactor. Co(2+) serves as cofactor.

The catalysed reaction is N-succinyl-(2S,6S)-2,6-diaminopimelate + H2O = (2S,6S)-2,6-diaminopimelate + succinate. It functions in the pathway amino-acid biosynthesis; L-lysine biosynthesis via DAP pathway; LL-2,6-diaminopimelate from (S)-tetrahydrodipicolinate (succinylase route): step 3/3. Its function is as follows. Catalyzes the hydrolysis of N-succinyl-L,L-diaminopimelic acid (SDAP), forming succinate and LL-2,6-diaminopimelate (DAP), an intermediate involved in the bacterial biosynthesis of lysine and meso-diaminopimelic acid, an essential component of bacterial cell walls. This is Succinyl-diaminopimelate desuccinylase from Bartonella henselae (strain ATCC 49882 / DSM 28221 / CCUG 30454 / Houston 1) (Rochalimaea henselae).